The primary structure comprises 167 residues: Ribosome maturation factor RimM (167 aa).

Positions 92-166 (DDEFYHTDLI…RIVADPPEGL (75 aa)) constitute a PRC barrel domain.

The protein belongs to the RimM family. Binds ribosomal protein uS19.

Its subcellular location is the cytoplasm. Its function is as follows. An accessory protein needed during the final step in the assembly of 30S ribosomal subunit, possibly for assembly of the head region. Essential for efficient processing of 16S rRNA. May be needed both before and after RbfA during the maturation of 16S rRNA. It has affinity for free ribosomal 30S subunits but not for 70S ribosomes. The polypeptide is Ribosome maturation factor RimM (Ruegeria pomeroyi (strain ATCC 700808 / DSM 15171 / DSS-3) (Silicibacter pomeroyi)).